We begin with the raw amino-acid sequence, 1165 residues long: DNA-directed RNA polymerase subunit beta (1165 aa).

Belongs to the RNA polymerase beta chain family. As to quaternary structure, the RNAP catalytic core consists of 2 alpha, 1 beta, 1 beta' and 1 omega subunit. When a sigma factor is associated with the core the holoenzyme is formed, which can initiate transcription.

It carries out the reaction RNA(n) + a ribonucleoside 5'-triphosphate = RNA(n+1) + diphosphate. Functionally, DNA-dependent RNA polymerase catalyzes the transcription of DNA into RNA using the four ribonucleoside triphosphates as substrates. This Corynebacterium glutamicum (strain R) protein is DNA-directed RNA polymerase subunit beta.